The following is a 185-amino-acid chain: Peptidyl-tRNA hydrolase (185 aa).

Residue Y14 coordinates tRNA. The Proton acceptor role is filled by H19. 3 residues coordinate tRNA: F64, N66, and N112.

Belongs to the PTH family. Monomer.

The protein localises to the cytoplasm. The enzyme catalyses an N-acyl-L-alpha-aminoacyl-tRNA + H2O = an N-acyl-L-amino acid + a tRNA + H(+). Its function is as follows. Hydrolyzes ribosome-free peptidyl-tRNAs (with 1 or more amino acids incorporated), which drop off the ribosome during protein synthesis, or as a result of ribosome stalling. Catalyzes the release of premature peptidyl moieties from peptidyl-tRNA molecules trapped in stalled 50S ribosomal subunits, and thus maintains levels of free tRNAs and 50S ribosomes. In Lacticaseibacillus casei (strain BL23) (Lactobacillus casei), this protein is Peptidyl-tRNA hydrolase.